The following is a 119-amino-acid chain: gSG7 salivary protein (119 aa).

Cystine bridges form between C58–C113 and C81–C91.

It is found in the secreted. The activity is increased in the presence of host properdin (CFP). Its function is as follows. Salivary protein that inhibits the alternative pathway of complement system activation in the host while having no inhibitory effect on the classical pathway. Inhibits activity of activated host C3-convertase complex C3bBb (C3-CFB). Enhances accumulation of C3bBb on immobilized properdin. In Anopheles freeborni (Western malaria mosquito), this protein is gSG7 salivary protein.